Consider the following 263-residue polypeptide: Endonuclease 8 (263 aa).

Proline 2 functions as the Schiff-base intermediate with DNA in the catalytic mechanism. The active-site Proton donor is glutamate 3. The active-site Proton donor; for beta-elimination activity is the lysine 53. DNA is bound by residues glutamine 70, arginine 125, and asparagine 169. The FPG-type zinc-finger motif lies at 229–263 (KVFHRDGEACERCGGIIEKTTLSSRPFYWCPHCQK). The Proton donor; for delta-elimination activity role is filled by arginine 253.

This sequence belongs to the FPG family. The cofactor is Zn(2+).

It carries out the reaction 2'-deoxyribonucleotide-(2'-deoxyribose 5'-phosphate)-2'-deoxyribonucleotide-DNA = a 3'-end 2'-deoxyribonucleotide-(2,3-dehydro-2,3-deoxyribose 5'-phosphate)-DNA + a 5'-end 5'-phospho-2'-deoxyribonucleoside-DNA + H(+). Involved in base excision repair of DNA damaged by oxidation or by mutagenic agents. Acts as a DNA glycosylase that recognizes and removes damaged bases. Has a preference for oxidized pyrimidines, such as thymine glycol, 5,6-dihydrouracil and 5,6-dihydrothymine. Has AP (apurinic/apyrimidinic) lyase activity and introduces nicks in the DNA strand. Cleaves the DNA backbone by beta-delta elimination to generate a single-strand break at the site of the removed base with both 3'- and 5'-phosphates. The polypeptide is Endonuclease 8 (Salmonella arizonae (strain ATCC BAA-731 / CDC346-86 / RSK2980)).